We begin with the raw amino-acid sequence, 139 residues long: MFDIGFTELLLVGLVALMVLGPERLPGAVRTTGLWVGRLKRSFSNIKAEVEREIGADEIRRQLHNERILDLEREMKQSIMPPPASNPAATPPSPPSEGAGQPANAASSSPGDTVTPAANPPAPSTETAQPLRSDRPSEP.

A helical transmembrane segment spans residues 1–21 (MFDIGFTELLLVGLVALMVLG). The interval 69–139 (LDLEREMKQS…PLRSDRPSEP (71 aa)) is disordered. Over residues 80 to 95 (MPPPASNPAATPPSPP) the composition is skewed to pro residues.

Belongs to the TatB family. The Tat system comprises two distinct complexes: a TatABC complex, containing multiple copies of TatA, TatB and TatC subunits, and a separate TatA complex, containing only TatA subunits. Substrates initially bind to the TatABC complex, which probably triggers association of the separate TatA complex to form the active translocon.

The protein localises to the cell inner membrane. Functionally, part of the twin-arginine translocation (Tat) system that transports large folded proteins containing a characteristic twin-arginine motif in their signal peptide across membranes. Together with TatC, TatB is part of a receptor directly interacting with Tat signal peptides. TatB may form an oligomeric binding site that transiently accommodates folded Tat precursor proteins before their translocation. In Stutzerimonas stutzeri (strain A1501) (Pseudomonas stutzeri), this protein is Sec-independent protein translocase protein TatB.